We begin with the raw amino-acid sequence, 316 residues long: tRNA-cytidine(32) 2-sulfurtransferase (316 aa).

The short motif at 52–57 (SGGKDS) is the PP-loop motif element. Positions 127, 130, and 218 each coordinate [4Fe-4S] cluster.

It belongs to the TtcA family. Homodimer. The cofactor is Mg(2+). It depends on [4Fe-4S] cluster as a cofactor.

It localises to the cytoplasm. It carries out the reaction cytidine(32) in tRNA + S-sulfanyl-L-cysteinyl-[cysteine desulfurase] + AH2 + ATP = 2-thiocytidine(32) in tRNA + L-cysteinyl-[cysteine desulfurase] + A + AMP + diphosphate + H(+). It functions in the pathway tRNA modification. Its function is as follows. Catalyzes the ATP-dependent 2-thiolation of cytidine in position 32 of tRNA, to form 2-thiocytidine (s(2)C32). The sulfur atoms are provided by the cysteine/cysteine desulfurase (IscS) system. This chain is tRNA-cytidine(32) 2-sulfurtransferase, found in Haemophilus ducreyi (strain 35000HP / ATCC 700724).